The chain runs to 224 residues: Fibrillarin-like rRNA/tRNA 2'-O-methyltransferase (224 aa).

Residues 82–83 (TT), 100–101 (EF), 125–126 (DA), and 145–148 (DVAQ) contribute to the S-adenosyl-L-methionine site.

This sequence belongs to the methyltransferase superfamily. Fibrillarin family. In terms of assembly, interacts with nop5. Component of box C/D small ribonucleoprotein (sRNP) particles that contain rpl7ae, FlpA and nop5, plus a guide RNA.

Its function is as follows. Involved in pre-rRNA and tRNA processing. Utilizes the methyl donor S-adenosyl-L-methionine to catalyze the site-specific 2'-hydroxyl methylation of ribose moieties in rRNA and tRNA. Site specificity is provided by a guide RNA that base pairs with the substrate. Methylation occurs at a characteristic distance from the sequence involved in base pairing with the guide RNA. The polypeptide is Fibrillarin-like rRNA/tRNA 2'-O-methyltransferase (Methanothermobacter thermautotrophicus (strain ATCC 29096 / DSM 1053 / JCM 10044 / NBRC 100330 / Delta H) (Methanobacterium thermoautotrophicum)).